The chain runs to 390 residues: Aspartate beta-hydroxylase domain-containing protein 1 (390 aa).

The disordered stretch occupies residues methionine 1–proline 54. The Cytoplasmic segment spans residues methionine 1–proline 72. Over residues glycine 41–asparagine 51 the composition is skewed to gly residues. Residues leucine 73–cysteine 95 traverse the membrane as a helical segment. Over tyrosine 96–proline 390 the chain is Lumenal. The disordered stretch occupies residues arginine 116–glutamate 143. Over residues proline 128–glycine 137 the composition is skewed to gly residues. Position 129 is a phosphoserine (serine 129).

Belongs to the aspartyl/asparaginyl beta-hydroxylase family.

It localises to the membrane. The polypeptide is Aspartate beta-hydroxylase domain-containing protein 1 (ASPHD1) (Homo sapiens (Human)).